The chain runs to 426 residues: Enolase (426 aa).

Gln-163 lines the (2R)-2-phosphoglycerate pocket. Glu-205 (proton donor) is an active-site residue. Asp-242, Glu-286, and Asp-313 together coordinate Mg(2+). Residues Lys-338, Arg-367, Ser-368, and Lys-389 each contribute to the (2R)-2-phosphoglycerate site. The Proton acceptor role is filled by Lys-338.

The protein belongs to the enolase family. It depends on Mg(2+) as a cofactor.

The protein localises to the cytoplasm. It localises to the secreted. It is found in the cell surface. It catalyses the reaction (2R)-2-phosphoglycerate = phosphoenolpyruvate + H2O. Its pathway is carbohydrate degradation; glycolysis; pyruvate from D-glyceraldehyde 3-phosphate: step 4/5. In terms of biological role, catalyzes the reversible conversion of 2-phosphoglycerate (2-PG) into phosphoenolpyruvate (PEP). It is essential for the degradation of carbohydrates via glycolysis. This chain is Enolase, found in Gemmatimonas aurantiaca (strain DSM 14586 / JCM 11422 / NBRC 100505 / T-27).